The primary structure comprises 97 residues: Mapk-regulated corepressor-interacting protein 1 (97 aa).

Residues 1 to 29 (MTSSPVSRVVYNGKRNSSPRSPTNSSEIF) form a disordered region. Residues 15–26 (RNSSPRSPTNSS) show a composition bias toward low complexity. A Phosphoserine modification is found at S21. At T30 the chain carries Phosphothreonine. At Y41 the chain carries Phosphotyrosine. K79 is modified (N6-acetyllysine). Positions 80 to 84 (PIDLS) match the PXDLS motif motif.

It belongs to the MCRIP family. In terms of assembly, interacts (unphosphorylated form, via the PXDLS motif) with CTBP1, competitively inhibiting CTBP-ZEB1 interaction. Interacts with CTBP2. Interacts with MCRIP2. Interacts with DDX6. Phosphorylation by MAPK3/1 (ERK1/2) regulates MCRIP1 binding to CTBP(s). In terms of tissue distribution, widely expressed (at protein level).

It localises to the nucleus. The protein localises to the cytoplasm. The protein resides in the stress granule. The phosphorylation status of MCRIP1 functions as a molecular switch to regulate epithelial-mesenchymal transition. Unphosphorylated MCRIP1 binds to and inhibits the transcriptional corepressor CTBP(s). When phosphorylated by MAPK/ERK, MCRIP1 releases CTBP(s) resulting in transcriptional silencing of the E-cadherin gene and induction of epithelial-mesenchymal transition. This chain is Mapk-regulated corepressor-interacting protein 1 (Mcrip1), found in Mus musculus (Mouse).